We begin with the raw amino-acid sequence, 645 residues long: DNA ligase (645 aa).

NAD(+) is bound by residues 30–34 (DIEYD), 79–80 (SM), and Glu106. The active-site N6-AMP-lysine intermediate is the Lys108. Residues Arg129, Glu163, and Lys302 each contribute to the NAD(+) site. Residues Cys396, Cys399, Cys412, and Cys417 each coordinate Zn(2+). The BRCT domain maps to 570 to 645 (ISQNVFTKKT…ISEDEFKEML (76 aa)).

Belongs to the NAD-dependent DNA ligase family. LigA subfamily. It depends on Mg(2+) as a cofactor. Mn(2+) serves as cofactor.

It carries out the reaction NAD(+) + (deoxyribonucleotide)n-3'-hydroxyl + 5'-phospho-(deoxyribonucleotide)m = (deoxyribonucleotide)n+m + AMP + beta-nicotinamide D-nucleotide.. DNA ligase that catalyzes the formation of phosphodiester linkages between 5'-phosphoryl and 3'-hydroxyl groups in double-stranded DNA using NAD as a coenzyme and as the energy source for the reaction. It is essential for DNA replication and repair of damaged DNA. The protein is DNA ligase of Campylobacter hominis (strain ATCC BAA-381 / DSM 21671 / CCUG 45161 / LMG 19568 / NCTC 13146 / CH001A).